A 181-amino-acid chain; its full sequence is Probable pyruvoyl-dependent arginine decarboxylase (181 aa).

Pyruvic acid (Ser) is present on serine 43.

The protein belongs to the PdaD family. Pyruvate is required as a cofactor.

The enzyme catalyses L-arginine + H(+) = agmatine + CO2. The protein is Probable pyruvoyl-dependent arginine decarboxylase of Chlorobium phaeobacteroides (strain BS1).